We begin with the raw amino-acid sequence, 95 residues long: Aspartyl/glutamyl-tRNA(Asn/Gln) amidotransferase subunit C (95 aa).

The protein belongs to the GatC family. As to quaternary structure, heterotrimer of A, B and C subunits.

It catalyses the reaction L-glutamyl-tRNA(Gln) + L-glutamine + ATP + H2O = L-glutaminyl-tRNA(Gln) + L-glutamate + ADP + phosphate + H(+). The catalysed reaction is L-aspartyl-tRNA(Asn) + L-glutamine + ATP + H2O = L-asparaginyl-tRNA(Asn) + L-glutamate + ADP + phosphate + 2 H(+). In terms of biological role, allows the formation of correctly charged Asn-tRNA(Asn) or Gln-tRNA(Gln) through the transamidation of misacylated Asp-tRNA(Asn) or Glu-tRNA(Gln) in organisms which lack either or both of asparaginyl-tRNA or glutaminyl-tRNA synthetases. The reaction takes place in the presence of glutamine and ATP through an activated phospho-Asp-tRNA(Asn) or phospho-Glu-tRNA(Gln). This Pseudomonas fluorescens (strain ATCC BAA-477 / NRRL B-23932 / Pf-5) protein is Aspartyl/glutamyl-tRNA(Asn/Gln) amidotransferase subunit C.